A 416-amino-acid chain; its full sequence is UDP-N-acetylglucosamine 1-carboxyvinyltransferase (416 aa).

22-23 contributes to the phosphoenolpyruvate binding site; it reads KN. Arg-92 provides a ligand contact to UDP-N-acetyl-alpha-D-glucosamine. Catalysis depends on Cys-116, which acts as the Proton donor. Cys-116 bears the 2-(S-cysteinyl)pyruvic acid O-phosphothioketal mark. Residues 121 to 125, Asp-304, and Ile-326 each bind UDP-N-acetyl-alpha-D-glucosamine; that span reads RPVDQ.

It belongs to the EPSP synthase family. MurA subfamily.

It is found in the cytoplasm. It catalyses the reaction phosphoenolpyruvate + UDP-N-acetyl-alpha-D-glucosamine = UDP-N-acetyl-3-O-(1-carboxyvinyl)-alpha-D-glucosamine + phosphate. Its pathway is cell wall biogenesis; peptidoglycan biosynthesis. Its function is as follows. Cell wall formation. Adds enolpyruvyl to UDP-N-acetylglucosamine. The chain is UDP-N-acetylglucosamine 1-carboxyvinyltransferase from Cupriavidus pinatubonensis (strain JMP 134 / LMG 1197) (Cupriavidus necator (strain JMP 134)).